Reading from the N-terminus, the 757-residue chain is Kin of IRRE-like protein 1 (757 aa).

Residues 1–16 (MLSLLVWILTLSDTFS) form the signal peptide. Over 17–499 (QGTQTRFSQE…REVLPVGIIA (483 aa)) the chain is Extracellular. 5 consecutive Ig-like C2-type domains span residues 21 to 115 (TRFS…AKLT), 120 to 216 (PEDT…TSIE), 223 to 299 (PTVT…TNVS), 308 to 387 (PRIV…EVPL), and 392 to 488 (PPII…IQLE). The cysteines at positions 42 and 100 are disulfide-linked. N-linked (GlcNAc...) asparagine glycosylation is found at Asn46 and Asn140. 2 disulfide bridges follow: Cys143-Cys200 and Cys244-Cys287. A glycan (N-linked (GlcNAc...) asparagine) is linked at Asn297. Cysteines 329 and 371 form a disulfide. Residues 405 to 407 (RGD) carry the Cell attachment site motif. The cysteines at positions 413 and 472 are disulfide-linked. N-linked (GlcNAc...) asparagine glycosylation is present at Asn471. Residues 500–520 (GATIGASILLIFFFIALVFFL) traverse the membrane as a helical segment. Topologically, residues 521-757 (YRRRKGSRKD…RFQQRMQTHV (237 aa)) are cytoplasmic. Position 574 is a phosphoserine (Ser574). Tyr605 and Tyr606 each carry phosphotyrosine; by FYN. Residues Tyr622 and Tyr625 each carry the phosphotyrosine modification. A disordered region spans residues 649 to 679 (QLNTYSRGPASDYGPEPTPPGPAAPAGTDTT). Tyr724 carries the phosphotyrosine modification.

This sequence belongs to the immunoglobulin superfamily. In terms of assembly, interacts with TJP1/ZO-1 and with NPHS2/podocin (via the C-terminus). Interacts with NPHS1/nephrin (via the Ig-like domains); this interaction is dependent on KIRREL1 glycosylation. Homodimer (via the Ig-like domains). Interacts when tyrosine-phosphorylated with GRB2. Phosphorylation probably regulates the interaction with NSH2. Phosphorylated at Tyr-605 and Tyr-606 by FYN, leading to GRB2 binding. Post-translationally, N-glycosylated. As to expression, abundantly expressed in kidney. Specifically expressed in podocytes of kidney glomeruli.

The protein localises to the cell membrane. Its function is as follows. Required for proper function of the glomerular filtration barrier. It is involved in the maintenance of a stable podocyte architecture with interdigitating foot processes connected by specialized cell-cell junctions, known as the slit diaphragm. It is a signaling protein that needs the presence of TEC kinases to fully trans-activate the transcription factor AP-1. This is Kin of IRRE-like protein 1 from Homo sapiens (Human).